The sequence spans 233 residues: Cilia- and flagella-associated protein 299 (233 aa).

It is found in the cytoplasm. The protein localises to the nucleus. In terms of biological role, may be involved in spermatogenesis. The protein is Cilia- and flagella-associated protein 299 of Xenopus laevis (African clawed frog).